A 295-amino-acid chain; its full sequence is Excinuclease cho (295 aa).

The 76-residue stretch at 33 to 108 (TRPGVYLFHG…IKEQQPLFNK (76 aa)) folds into the GIY-YIG domain.

In terms of biological role, incises the DNA at the 3' side of a lesion during nucleotide excision repair. Incises the DNA farther away from the lesion than UvrC. Not able to incise the 5' site of a lesion. When a lesion remains because UvrC is not able to induce the 3' incision, Cho incises the DNA. Then UvrC makes the 5' incision. The combined action of Cho and UvrC broadens the substrate range of nucleotide excision repair. The polypeptide is Excinuclease cho (cho) (Escherichia coli O6:H1 (strain CFT073 / ATCC 700928 / UPEC)).